Here is a 571-residue protein sequence, read N- to C-terminus: Chitin-inducible gibberellin-responsive protein 1 (571 aa).

Positions 61 to 77 are enriched in polar residues; that stretch reads TNTPDNQSSTETISAQP. 2 disordered regions span residues 61–80 and 151–180; these read TNTPDNQSSTETISAQPISP and QRSRTWSHESRQPLPGVGRSQFASGGYPTA. Residues 192 to 571 form the GRAS domain; that stretch reads ELREDPQIIV…RKLISASAWH (380 aa). Residues 199–259 form a leucine repeat I (LRI) region; it reads IIVKQLLTRC…VARHGNSGTN (61 aa). The interval 278–343 is VHIID; that stretch reads MRILYNICPY…GGPPRVRITG (66 aa). Residues 309 to 313 carry the VHIID motif; that stretch reads IHIID. The interval 359-391 is leucine repeat II (LRII); it reads IVGKMLKSMSEEFKIPLEFTPLSVYATQVTKEM. The interval 400-494 is PFYRE; the sequence is LSVNFTLQLH…QHCLAKDIVN (95 aa). The segment at 497–571 is SAW; that stretch reads ACEGKDRVER…RKLISASAWH (75 aa).

Belongs to the GRAS family.

The protein localises to the nucleus. In terms of biological role, may play a regulatory role in the early step of oligosaccharide elicitor response, downstream of the membrane-associated high-affinity chitin-binding protein. The sequence is that of Chitin-inducible gibberellin-responsive protein 1 (CIGR1) from Oryza sativa subsp. japonica (Rice).